Reading from the N-terminus, the 202-residue chain is Glycerol-3-phosphate acyltransferase (202 aa).

5 helical membrane-spanning segments follow: residues 6–26, 56–76, 82–102, 118–138, and 141–161; these read LTLG…AVLV, SAAL…YIAF, SVSL…PIFF, APIG…MVLI, and YSSL…WYLD.

This sequence belongs to the PlsY family. In terms of assembly, probably interacts with PlsX.

It is found in the cell inner membrane. It carries out the reaction an acyl phosphate + sn-glycerol 3-phosphate = a 1-acyl-sn-glycero-3-phosphate + phosphate. The protein operates within lipid metabolism; phospholipid metabolism. Catalyzes the transfer of an acyl group from acyl-phosphate (acyl-PO(4)) to glycerol-3-phosphate (G3P) to form lysophosphatidic acid (LPA). This enzyme utilizes acyl-phosphate as fatty acyl donor, but not acyl-CoA or acyl-ACP. The chain is Glycerol-3-phosphate acyltransferase from Shewanella woodyi (strain ATCC 51908 / MS32).